The chain runs to 155 residues: MTQDNSQAKAKAPAKSARRRARELALQGLYQWLLNRNDPGVVEAHLQDAQGFNKADRAHFDALLHGAIREETTLTEAFTPYLDRPVAELSPVERAALLVGAYELVHCVDIPYKVVINEAVELTKTFGGVEGYKYVNGVLDKLATQVRAVEVAARR.

The protein belongs to the NusB family.

Its function is as follows. Involved in transcription antitermination. Required for transcription of ribosomal RNA (rRNA) genes. Binds specifically to the boxA antiterminator sequence of the ribosomal RNA (rrn) operons. The sequence is that of Transcription antitermination protein NusB from Ralstonia pickettii (strain 12J).